The following is a 300-amino-acid chain: tRNA dimethylallyltransferase (300 aa).

Position 11–18 (11–18 (GPTAVGKS)) interacts with ATP. 13 to 18 (TAVGKS) provides a ligand contact to substrate. An interaction with substrate tRNA region spans residues 35-38 (DSIQ).

Belongs to the IPP transferase family. As to quaternary structure, monomer. Requires Mg(2+) as cofactor.

The enzyme catalyses adenosine(37) in tRNA + dimethylallyl diphosphate = N(6)-dimethylallyladenosine(37) in tRNA + diphosphate. Catalyzes the transfer of a dimethylallyl group onto the adenine at position 37 in tRNAs that read codons beginning with uridine, leading to the formation of N6-(dimethylallyl)adenosine (i(6)A). This Borrelia recurrentis (strain A1) protein is tRNA dimethylallyltransferase.